Here is a 93-residue protein sequence, read N- to C-terminus: Mammaglobin-A (93 aa).

The first 18 residues, Met1–Ala18, serve as a signal peptide directing secretion. 2 N-linked (GlcNAc...) asparagine glycosylation sites follow: Asn53 and Asn68.

This sequence belongs to the secretoglobin family. Lipophilin subfamily. As to expression, mammary gland specific. Over-expressed in breast cancer.

The protein localises to the secreted. This is Mammaglobin-A (SCGB2A2) from Homo sapiens (Human).